We begin with the raw amino-acid sequence, 128 residues long: Fluoride-specific ion channel FluC (128 aa).

Helical transmembrane passes span 5 to 25, 34 to 54, 67 to 87, and 99 to 119; these read LFIS…GLLF, FGAL…LGLF, FLIT…SEVV, and FCVL…GIWI. Residues G74 and T77 each contribute to the Na(+) site.

The protein belongs to the fluoride channel Fluc/FEX (TC 1.A.43) family.

The protein localises to the cell inner membrane. The catalysed reaction is fluoride(in) = fluoride(out). Its activity is regulated as follows. Na(+) is not transported, but it plays an essential structural role and its presence is essential for fluoride channel function. Fluoride-specific ion channel. Important for reducing fluoride concentration in the cell, thus reducing its toxicity. In Haemophilus influenzae (strain PittEE), this protein is Fluoride-specific ion channel FluC.